The sequence spans 370 residues: Formate dehydrogenase (370 aa).

Isoleucine 94 and asparagine 120 together coordinate substrate. NAD(+) is bound by residues 175–176 (RI), aspartate 196, 231–235 (PLHES), threonine 257, aspartate 283, and 312–315 (HMSG).

The protein belongs to the D-isomer specific 2-hydroxyacid dehydrogenase family. FDH subfamily. Homodimer.

Its subcellular location is the cytoplasm. It carries out the reaction formate + NAD(+) = CO2 + NADH. Catalyzes the NAD(+)-dependent oxidation of formate to carbon dioxide. Formate oxidation is the final step in the methanol oxidation pathway in methylotrophic microorganisms. Has a role in the detoxification of exogenous formate in non-methylotrophic organisms. This is Formate dehydrogenase from Chaetomium thermophilum (strain DSM 1495 / CBS 144.50 / IMI 039719) (Thermochaetoides thermophila).